The sequence spans 169 residues: Protein ORFb in retron Ec67 (169 aa).

This Escherichia coli protein is Protein ORFb in retron Ec67.